The primary structure comprises 205 residues: Ypt/Rab-type GTPase Rab7 (205 aa).

Residues 17 to 23 (SGVGKTS), 33 to 40 (FSASYKAT), Gly-66, 125 to 128 (NKID), and 157 to 159 (SAK) contribute to the GTP site. The Effector region signature appears at 37–45 (YKATIGADF). Residues Cys-203 and Cys-205 are each lipidated (S-geranylgeranyl cysteine). Residue Cys-205 is modified to Cysteine methyl ester.

This sequence belongs to the small GTPase superfamily. Rab family.

It localises to the cell membrane. Its activity is regulated as follows. Alternates between an inactive form bound to GDP and an active form bound to GTP. Activated by guanine nucleotide-exchange factors (GEFs), and inactivated by GTPase-activating proteins (GAPs). Ypt/Rab-type GTPases are key regulators of membrane trafficking and intracellular vesicular transport. They act as molecular switches that convert between GTP-bound and GDP-bound states, and regulate virtually all steps of membrane traffic from the formation of the transport vesicle at the donor membrane to its fusion at the target membrane. In the GDP-bound state, Ypt proteins are predominantly cytosolic, solubilized through the interaction with a GDP dissociation inhibitor (GDI). In the GTP-bound state, the proteins are membrane bound and interact with specific effector proteins that select cargo, promote vesicle movement, or verify the correct site of fusion. In Neurospora crassa (strain ATCC 24698 / 74-OR23-1A / CBS 708.71 / DSM 1257 / FGSC 987), this protein is Ypt/Rab-type GTPase Rab7 (gtp-14).